An 88-amino-acid polypeptide reads, in one-letter code: Small ribosomal subunit protein bS18 (88 aa).

The tract at residues 1-22 is disordered; the sequence is MSTKNAKPKKEAQRRPSRKAKV.

Belongs to the bacterial ribosomal protein bS18 family. Part of the 30S ribosomal subunit. Forms a tight heterodimer with protein bS6.

In terms of biological role, binds as a heterodimer with protein bS6 to the central domain of the 16S rRNA, where it helps stabilize the platform of the 30S subunit. The sequence is that of Small ribosomal subunit protein bS18 (rpsR) from Thermus thermophilus.